A 267-amino-acid polypeptide reads, in one-letter code: Cilia- and flagella-associated protein 300 (267 aa).

This sequence belongs to the CFAP300 family. Interacts with DNAAF2. In terms of tissue distribution, expressed in nasal epithelial cells.

Its subcellular location is the cytoplasm. The protein resides in the cytoskeleton. The protein localises to the cilium axoneme. Functionally, cilium- and flagellum-specific protein that plays a role in axonemal structure organization and motility. May play a role in outer and inner dynein arm assembly. This Homo sapiens (Human) protein is Cilia- and flagella-associated protein 300.